The sequence spans 201 residues: MDLSLLWVLLPLVTMAWGQYGDYGYPYQQYHDYSDDGWVNLNRQGFSYQCPQGQVIVAVRSIFSKKEGSDRQWNYACMPTPQSLGEPTECWWEEINRAGMEWYQTCSNNGLVAGFQSRYFESVLDREWQFYCCRYSKRCPYSCWLTTEYPGHYGEEMDMISYNYDYYIRGATTTFSAVERDRQWKFIMCRMTEYDCEFANV.

The first 18 residues, 1–18 (MDLSLLWVLLPLVTMAWG), serve as a signal peptide directing secretion. Gln-19 bears the Pyrrolidone carboxylic acid mark. A Sulfotyrosine modification is found at Tyr-23. 4 repeat units span residues 26 to 79 (PYQQ…ACMP), 70 to 75 (DRQWNY), 80 to 135 (TPQS…CCRY), and 125 to 130 (DREWQF). Residues 26-186 (PYQQYHDYSD…AVERDRQWKF (161 aa)) form a 2 X 53-55 AA tandem repeats region. 5 cysteine pairs are disulfide-bonded: Cys-50/Cys-77, Cys-90/Cys-132, Cys-106/Cys-133, Cys-139/Cys-196, and Cys-143/Cys-189. A 3 X 6 AA repeats of D-R-[EQ]-W-[NQK]-[FY] region spans residues 70 to 186 (DRQWNYACMP…AVERDRQWKF (117 aa)). Tyr-162, Tyr-164, Tyr-166, and Tyr-167 each carry sulfotyrosine. One copy of the 3-3 repeat lies at 181–186 (DRQWKF). At Tyr-194 the chain carries Sulfotyrosine.

This sequence belongs to the dermatopontin family. In terms of assembly, interacts with TGFB1, DCN and collagen. Sulfated on tyrosine residue(s). Expressed in fibroblasts, heart, skeletal muscle, brain and pancreas. Expressed at an intermediate level in lung and kidney, and at a low level in liver and placenta. Expressed at a lower level in fibroblasts from hypertrophic scar lesional skin and in fibroblasts from patients with systemic sclerosis than in normal skin fibroblasts.

Its subcellular location is the secreted. It localises to the extracellular space. The protein resides in the extracellular matrix. Functionally, seems to mediate adhesion by cell surface integrin binding. May serve as a communication link between the dermal fibroblast cell surface and its extracellular matrix environment. Enhances TGFB1 activity. Inhibits cell proliferation. Accelerates collagen fibril formation, and stabilizes collagen fibrils against low-temperature dissociation. The protein is Dermatopontin (DPT) of Homo sapiens (Human).